Consider the following 329-residue polypeptide: Cytosolic arginine sensor for mTORC1 subunit 2 (329 aa).

ACT domains follow at residues 72–140 (ADAT…HTLS) and 262–322 (ELWK…SALK).

It belongs to the GATS family. Forms homodimers and heterodimers with CASTOR1. Interacts with the GATOR2 complex which is composed of MIOS, SEC13, SEH1L, WDR24 and WDR59; the interaction is not regulated by arginine. Widely expressed.

The protein resides in the cytoplasm. It is found in the cytosol. Functions as a negative regulator of the TORC1 signaling pathway through the GATOR complex. As part of homodimers or heterodimers with CASTOR1, directly binds and inhibits the GATOR subcomplex GATOR2 and thereby mTORC1. Does not directly bind arginine, but binding of arginine to CASTOR1 disrupts the interaction of CASTOR2-containing heterodimers with GATOR2 which can in turn activate mTORC1 and the TORC1 signaling pathway. The sequence is that of Cytosolic arginine sensor for mTORC1 subunit 2 from Homo sapiens (Human).